Consider the following 360-residue polypeptide: uncharacterized protein (360 aa).

Residues 22 to 32 are compositionally biased toward acidic residues; sequence EEDVEPNEEAE. A disordered region spans residues 22–55; it reads EEDVEPNEEAEGPGGVHKKRRGARKKNRRQRMEG. The segment covering 37-50 has biased composition (basic residues); that stretch reads VHKKRRGARKKNRR.

This is an uncharacterized protein from Caenorhabditis elegans.